Here is a 528-residue protein sequence, read N- to C-terminus: Intestinal-type alkaline phosphatase (528 aa).

The N-terminal stretch at 1–19 (MQGPWVLLLLGLRLQLSLG) is a signal peptide. Asp-61 lines the Mg(2+) pocket. The Zn(2+) site is built by Asp-61 and Ser-111. Ser-111 functions as the Phosphoserine intermediate in the catalytic mechanism. A disulfide bridge connects residues Cys-140 and Cys-202. Asn-141 carries N-linked (GlcNAc...) asparagine glycosylation. Ser-174 is a Mg(2+) binding site. Residue Glu-235 participates in Ca(2+) binding. An N-linked (GlcNAc...) asparagine glycan is attached at Asn-268. Phe-288, Glu-289, and Asp-304 together coordinate Ca(2+). Position 330 (Glu-330) interacts with Mg(2+). Asp-335, His-339, Asp-376, and His-377 together coordinate Zn(2+). N-linked (GlcNAc...) asparagine glycosylation occurs at Asn-429. His-451 contacts Zn(2+). Cys-486 and Cys-493 are joined by a disulfide. Asp-503 is lipidated: GPI-anchor amidated aspartate. A propeptide spans 504–528 (AAHPVAASLPLLAGTLLLLGASAAP) (removed in mature form).

The protein belongs to the alkaline phosphatase family. Homodimer. The cofactor is Mg(2+). It depends on Zn(2+) as a cofactor. Ca(2+) serves as cofactor.

The protein localises to the cell membrane. The catalysed reaction is a phosphate monoester + H2O = an alcohol + phosphate. Its function is as follows. Alkaline phosphatase that can hydrolyze various phosphate compounds. The polypeptide is Intestinal-type alkaline phosphatase (ALPI) (Homo sapiens (Human)).